A 246-amino-acid polypeptide reads, in one-letter code: Glutamate/aspartate import permease protein GltJ (246 aa).

The region spanning F29 to M230 is the ABC transmembrane type-1 domain. The next 5 membrane-spanning stretches (helical) occupy residues I33–L53, N74–E94, L104–A124, L179–A196, and F212–L232.

Belongs to the binding-protein-dependent transport system permease family. HisMQ subfamily. In terms of assembly, the complex is composed of two ATP-binding proteins (GltL), two transmembrane proteins (GltJ and GltK) and a solute-binding protein (GltI).

The protein resides in the cell inner membrane. Its function is as follows. Part of the ABC transporter complex GltIJKL involved in glutamate and aspartate uptake. Probably responsible for the translocation of the substrate across the membrane. The polypeptide is Glutamate/aspartate import permease protein GltJ (gltJ) (Escherichia coli O6:H1 (strain CFT073 / ATCC 700928 / UPEC)).